Here is a 177-residue protein sequence, read N- to C-terminus: MKTRIHVVQGDITKLAVDVIVNAANPSLMGGGGVDGAIHRAAGPALLDACLKVRQQQGDCPTGHAVITLAGDLPAKAVVHTVGPVWRGGEQNEDQLLQDAYLNSLRLVAANSYTSVAFPAISTGVYSYPRAAAAEIAVKTVSEFITRHALPEQVYFVCYDEENAHLYERLLTQQGDE.

In terms of domain architecture, Macro spans Met1–Gly175. Residues Asp11–Ile12, Asn25, Gly33–Asp35, and Ser122–Tyr126 contribute to the substrate site. Catalysis depends on Asp35, which acts as the Proton acceptor.

It belongs to the MacroD-type family. YmdB subfamily. In terms of assembly, homodimer. Interacts with RNase III.

It carries out the reaction 3''-O-acetyl-ADP-D-ribose + H2O = ADP-D-ribose + acetate + H(+). It catalyses the reaction 2''-O-acetyl-ADP-D-ribose + H2O = ADP-D-ribose + acetate + H(+). In terms of biological role, deacetylates O-acetyl-ADP ribose to yield ADP-ribose and free acetate. Down-regulates ribonuclease 3 (RNase III) activity. Acts by interacting directly with the region of the ribonuclease that is required for dimerization/activation. The polypeptide is O-acetyl-ADP-ribose deacetylase (Shigella flexneri serotype 5b (strain 8401)).